We begin with the raw amino-acid sequence, 340 residues long: Phosphoribosylformylglycinamidine cyclo-ligase (340 aa).

Belongs to the AIR synthase family.

Its subcellular location is the cytoplasm. It catalyses the reaction 2-formamido-N(1)-(5-O-phospho-beta-D-ribosyl)acetamidine + ATP = 5-amino-1-(5-phospho-beta-D-ribosyl)imidazole + ADP + phosphate + H(+). It functions in the pathway purine metabolism; IMP biosynthesis via de novo pathway; 5-amino-1-(5-phospho-D-ribosyl)imidazole from N(2)-formyl-N(1)-(5-phospho-D-ribosyl)glycinamide: step 2/2. This is Phosphoribosylformylglycinamidine cyclo-ligase from Streptococcus pyogenes serotype M2 (strain MGAS10270).